Reading from the N-terminus, the 616-residue chain is Chaperone protein HscA (616 aa).

This sequence belongs to the heat shock protein 70 family.

Functionally, chaperone involved in the maturation of iron-sulfur cluster-containing proteins. Has a low intrinsic ATPase activity which is markedly stimulated by HscB. Involved in the maturation of IscU. The polypeptide is Chaperone protein HscA (Escherichia coli (strain SMS-3-5 / SECEC)).